Here is a 1388-residue protein sequence, read N- to C-terminus: Dicer-like protein 2 (1388 aa).

A Helicase ATP-binding domain is found at 23 to 203 (MLEASMKENI…LLTVESNLDA (181 aa)). 36 to 43 (MDTGSGKT) is a binding site for ATP. A DEAH box motif is present at residues 144–147 (DEAH). Residues 371-537 (SLLNFLDSLD…DDERQLQSVS (167 aa)) enclose the Helicase C-terminal domain. Residues 564-658 (AMAHLHHFCA…LPLTKRPELK (95 aa)) enclose the Dicer dsRNA-binding fold domain. RNase III domains lie at 919 to 1059 (ATRL…MDGG) and 1098 to 1281 (NERL…VDSG). 3 residues coordinate Mg(2+): Glu-1137, Asp-1267, and Glu-1270.

Belongs to the helicase family. Dicer subfamily. Mg(2+) is required as a cofactor. Mn(2+) serves as cofactor.

In terms of biological role, dicer-like endonuclease involved in cleaving double-stranded RNA in the RNA interference (RNAi) pathway. Produces 21 to 25 bp dsRNAs (siRNAs) which target the selective destruction of homologous RNAs leading to sequence-specific suppression of gene expression, called post-transcriptional gene silencing (PTGS). Part of a broad host defense response against viral infection and transposons. In Neosartorya fischeri (strain ATCC 1020 / DSM 3700 / CBS 544.65 / FGSC A1164 / JCM 1740 / NRRL 181 / WB 181) (Aspergillus fischerianus), this protein is Dicer-like protein 2 (dcl2).